A 382-amino-acid polypeptide reads, in one-letter code: O-methyltransferase okaF (382 aa).

Residues Glu-249 and Arg-287 each contribute to the S-adenosyl-L-methionine site. Residue His-291 is the Proton acceptor of the active site.

This sequence belongs to the class I-like SAM-binding methyltransferase superfamily. Cation-independent O-methyltransferase family.

The catalysed reaction is 3-desmethyl okaramine B + S-adenosyl-L-methionine = okaramine B + S-adenosyl-L-homocysteine + H(+). Its pathway is alkaloid biosynthesis. In terms of biological role, O-methyltransferase; part of the gene cluster that mediates the biosynthesis of okaramine B, a prenylated indole alkaloid that possesses an unusual octacyclic ring system, including a four-membered azetidine ring and an eight-membered azocine ring, and that exhibits insecticidal activity against silkworm larvae. Within the pathway, okaF catalyzes the last step which is the methylation of 3-desmethyl okaramine B to produce okaramine B. With okaG, OkaF is also able to produce okaramine D from okaramine E. The biosynthesis begins with the NRPS okaA that condenses two tryptophan molecules into cyclo(L-Trp-L-Trp). Prenylation by the prenyltransferase okaC then leads to the formation of cyclo(N8-(alpha,alpha-dimethylallyl)-L-Trp-6a-(alpha,alpha-dime-thylallyl)-L-Trp). This is followed by indole 2,3-epoxidation by the FAD-dependent monooxygenase okaB to facilitate the formation of the hexahydropyrrolo[2,3-b]indole (HPI) moiety of okaramine C. The cytochrome P450 monooxygenase okaD then likely catalyzes formation of the eight-membered ring of okaramine A. The dioxygenase okaE further forms the unusual 2-dimethyl-3-methyl-azetidine ring to yield 12-deshydroxyl okaramine E, as well as the hydroxylation of 12-deshydroxyl okaramine E to produce okaramine E. The cytochrome P450 monoxygenase okaG converts 12-deshydroxyl okaramine E into 3-desmethyl okaramine B which is further methylated by the methyltransferase okaF into okaramine B. In a shunt pathway, okaG and okaF together are also able to convert okaramine E into okaramine D. Okaramine H is produced by nonenzymatic conversion from okaramine A. This chain is O-methyltransferase okaF, found in Penicillium ochrochloron.